A 289-amino-acid chain; its full sequence is Shikimate dehydrogenase (NADP(+)) (289 aa).

Shikimate contacts are provided by residues 19-21 (SMS) and Thr66. Lys70 functions as the Proton acceptor in the catalytic mechanism. The shikimate site is built by Asn91 and Asp106. Residues 131 to 135 (GAGGA), 155 to 160 (NRTLKK), and Leu229 each bind NADP(+). Residue Tyr231 coordinates shikimate. Position 252 (Gly252) interacts with NADP(+).

This sequence belongs to the shikimate dehydrogenase family. In terms of assembly, homodimer.

It catalyses the reaction shikimate + NADP(+) = 3-dehydroshikimate + NADPH + H(+). It participates in metabolic intermediate biosynthesis; chorismate biosynthesis; chorismate from D-erythrose 4-phosphate and phosphoenolpyruvate: step 4/7. Involved in the biosynthesis of the chorismate, which leads to the biosynthesis of aromatic amino acids. Catalyzes the reversible NADPH linked reduction of 3-dehydroshikimate (DHSA) to yield shikimate (SA). The protein is Shikimate dehydrogenase (NADP(+)) of Halothermothrix orenii (strain H 168 / OCM 544 / DSM 9562).